The chain runs to 701 residues: Transcriptional regulator Kaiso (701 aa).

Positions 32-94 (CDVTVIVEDR…IYSSKIVRVR (63 aa)) constitute a BTB domain. Disordered regions lie at residues 128–158 (GAGG…SPLP) and 181–311 (SSDD…QNQH). Positions 245–258 (TPSSQVQLTQNSLP) are enriched in polar residues. Positions 259–273 (TNQQSSKNTSSTTQK) are enriched in low complexity. Polar residues predominate over residues 278–311 (VNANISKNPTPAANGFLSPTAQKQGTPNAVQNQH). The interval 470–609 (AKLDLDGLPN…QIRQYAYVNN (140 aa)) is required for methylation dependent DNA-binding. 3 consecutive C2H2-type zinc fingers follow at residues 501–523 (YICI…FNVH), 529–551 (YPCR…EIHH), and 557–580 (YQCL…RSVH). A required for sequence specific DNA-binding region spans residues 519-701 (HFNVHSWEKK…EFEFVIPESY (183 aa)). Residues 644-664 (DIDPDEPQQPASEGNHANSAT) are disordered. Over residues 652 to 664 (QPASEGNHANSAT) the composition is skewed to polar residues.

In terms of assembly, self associates. Interacts with tcf7l1-A, leading to repression of tcf7l1-A target genes. Interacts with ctnnd1, and this interaction may inhibit DNA-binding. Interacts with ncor1.

It is found in the nucleus. Transcriptional regulator with bimodal DNA-binding specificity. Binds to methylated CpG dinucleotides in the consensus sequence 5'-CGCG-3' and also binds to the non-methylated consensus sequence 5'-CTGCNA-3'. May recruit the N-CoR repressor complex to promote histone deacetylation and the formation of repressive chromatin structures in target gene promoters. Contributes to the repression of target genes of the Wnt signaling pathway and to the methylation-dependent repression of zygotic transcription prior to the mid-blastula transition (MBT). Also required for gastrulation movements. This chain is Transcriptional regulator Kaiso (zbtb33), found in Xenopus laevis (African clawed frog).